Consider the following 295-residue polypeptide: Methionine aminopeptidase (295 aa).

His-63 serves as a coordination point for substrate. A divalent metal cation contacts are provided by Asp-83, Asp-94, and His-154. His-162 contacts substrate. A divalent metal cation is bound by residues Glu-188 and Glu-281.

This sequence belongs to the peptidase M24A family. Methionine aminopeptidase archaeal type 2 subfamily. As to quaternary structure, monomer. Requires Co(2+) as cofactor. The cofactor is Zn(2+). Mn(2+) is required as a cofactor. It depends on Fe(2+) as a cofactor.

It catalyses the reaction Release of N-terminal amino acids, preferentially methionine, from peptides and arylamides.. In terms of biological role, removes the N-terminal methionine from nascent proteins. The N-terminal methionine is often cleaved when the second residue in the primary sequence is small and uncharged (Met-Ala-, Cys, Gly, Pro, Ser, Thr, or Val). In Thermococcus kodakarensis (strain ATCC BAA-918 / JCM 12380 / KOD1) (Pyrococcus kodakaraensis (strain KOD1)), this protein is Methionine aminopeptidase.